A 165-amino-acid polypeptide reads, in one-letter code: Polcalcin Jun o 2 (165 aa).

EF-hand domains lie at 22–57 (QSVHELEEVFKKFDANGDGKISGSELADILRSLGSD), 58–86 (VGEAEVKAMMEEADADGDGYVSLQEFVDL), 91–126 (ASVKDLKNAFKVFDRDCNGSISAAELCHTLESVGEP), and 127–162 (CTIEESKNIIHNVDKNGDGLISVEEFQTMMTSEMTD). Aspartate 35, asparagine 37, aspartate 39, lysine 41, glutamate 46, aspartate 71, aspartate 73, aspartate 75, tyrosine 77, glutamate 82, aspartate 104, aspartate 106, asparagine 108, serine 110, glutamate 115, aspartate 140, asparagine 142, aspartate 144, and glutamate 151 together coordinate Ca(2+).

The polypeptide is Polcalcin Jun o 2 (Juniperus oxycedrus (Prickly juniper)).